We begin with the raw amino-acid sequence, 353 residues long: Photosystem II protein D1 (353 aa).

Threonine 2 carries the N-acetylthreonine modification. A Phosphothreonine modification is found at threonine 2. 3 consecutive transmembrane segments (helical) span residues 29–46 (YIGW…TATS), 118–133 (HFLL…EWEL), and 142–156 (WIAV…AATA). Residue histidine 118 coordinates chlorophyll a. Tyrosine 126 lines the pheophytin a pocket. [CaMn4O5] cluster-binding residues include aspartate 170 and glutamate 189. Residues 197–218 (FHMLGVAGVFGGSLFSAMHGSL) form a helical membrane-spanning segment. Position 198 (histidine 198) interacts with chlorophyll a. Residues histidine 215 and 264-265 (SF) contribute to the a quinone site. Fe cation is bound at residue histidine 215. Residue histidine 272 participates in Fe cation binding. The chain crosses the membrane as a helical span at residues 274–288 (FLAAWPVVGIWFTAL). 4 residues coordinate [CaMn4O5] cluster: histidine 332, glutamate 333, aspartate 342, and alanine 344. Positions 345-353 (AVEANSIDG) are excised as a propeptide.

This sequence belongs to the reaction center PufL/M/PsbA/D family. In terms of assembly, PSII is composed of 1 copy each of membrane proteins PsbA, PsbB, PsbC, PsbD, PsbE, PsbF, PsbH, PsbI, PsbJ, PsbK, PsbL, PsbM, PsbT, PsbX, PsbY, PsbZ, Psb30/Ycf12, at least 3 peripheral proteins of the oxygen-evolving complex and a large number of cofactors. It forms dimeric complexes. The D1/D2 heterodimer binds P680, chlorophylls that are the primary electron donor of PSII, and subsequent electron acceptors. It shares a non-heme iron and each subunit binds pheophytin, quinone, additional chlorophylls, carotenoids and lipids. D1 provides most of the ligands for the Mn4-Ca-O5 cluster of the oxygen-evolving complex (OEC). There is also a Cl(-1) ion associated with D1 and D2, which is required for oxygen evolution. The PSII complex binds additional chlorophylls, carotenoids and specific lipids. serves as cofactor. Tyr-161 forms a radical intermediate that is referred to as redox-active TyrZ, YZ or Y-Z. In terms of processing, C-terminally processed by CTPA; processing is essential to allow assembly of the oxygen-evolving complex and thus photosynthetic growth.

The protein resides in the plastid. It localises to the chloroplast thylakoid membrane. It catalyses the reaction 2 a plastoquinone + 4 hnu + 2 H2O = 2 a plastoquinol + O2. Its function is as follows. Photosystem II (PSII) is a light-driven water:plastoquinone oxidoreductase that uses light energy to abstract electrons from H(2)O, generating O(2) and a proton gradient subsequently used for ATP formation. It consists of a core antenna complex that captures photons, and an electron transfer chain that converts photonic excitation into a charge separation. The D1/D2 (PsbA/PsbD) reaction center heterodimer binds P680, the primary electron donor of PSII as well as several subsequent electron acceptors. This Cryptomeria japonica (Japanese cedar) protein is Photosystem II protein D1.